A 275-amino-acid polypeptide reads, in one-letter code: Ribosomal RNA small subunit methyltransferase A (275 aa).

S-adenosyl-L-methionine-binding residues include N19, L21, G46, E71, D94, and N117.

Belongs to the class I-like SAM-binding methyltransferase superfamily. rRNA adenine N(6)-methyltransferase family. RsmA subfamily.

It localises to the cytoplasm. The catalysed reaction is adenosine(1518)/adenosine(1519) in 16S rRNA + 4 S-adenosyl-L-methionine = N(6)-dimethyladenosine(1518)/N(6)-dimethyladenosine(1519) in 16S rRNA + 4 S-adenosyl-L-homocysteine + 4 H(+). Specifically dimethylates two adjacent adenosines (A1518 and A1519) in the loop of a conserved hairpin near the 3'-end of 16S rRNA in the 30S particle. May play a critical role in biogenesis of 30S subunits. In Burkholderia lata (strain ATCC 17760 / DSM 23089 / LMG 22485 / NCIMB 9086 / R18194 / 383), this protein is Ribosomal RNA small subunit methyltransferase A.